Reading from the N-terminus, the 202-residue chain is Dephospho-CoA kinase (202 aa).

One can recognise a DPCK domain in the interval 4–201; the sequence is VIGLTGGIAS…QKYLAMSKQN (198 aa). 12–17 contributes to the ATP binding site; the sequence is ASGKTT.

Belongs to the CoaE family.

It is found in the cytoplasm. The enzyme catalyses 3'-dephospho-CoA + ATP = ADP + CoA + H(+). Its pathway is cofactor biosynthesis; coenzyme A biosynthesis; CoA from (R)-pantothenate: step 5/5. Functionally, catalyzes the phosphorylation of the 3'-hydroxyl group of dephosphocoenzyme A to form coenzyme A. This is Dephospho-CoA kinase from Vibrio vulnificus (strain CMCP6).